A 449-amino-acid polypeptide reads, in one-letter code: Jacalin-related lectin 20 (449 aa).

Disordered regions lie at residues 1 to 20 and 294 to 314; these read MAQR…DDGA and APPI…GDGG. Ala-2 carries the post-translational modification N-acetylalanine. Jacalin-type lectin domains lie at 2–144, 147–294, and 303–446; these read AQRL…YFTP, PIKQ…HFGA, and TEKL…TVAP.

The protein belongs to the jacalin lectin family.

The sequence is that of Jacalin-related lectin 20 (JAL20) from Arabidopsis thaliana (Mouse-ear cress).